The primary structure comprises 541 residues: Carotenoid 9,10(9',10')-cleavage dioxygenase 1 (541 aa).

Residues His222, His270, His336, and His526 each coordinate Fe cation.

The protein belongs to the carotenoid oxygenase family. It depends on Fe(2+) as a cofactor.

It catalyses the reaction all-trans-zeaxanthin + 2 O2 = 4,9-dimethyldodeca-2,4,6,8,10-pentaenedial + 2 (3R)-hydroxy-beta-ionone. Functionally, cleaves a variety of carotenoids at the 9-10 and 9'-10' double bonds. Probably not involved in abscisic acid biosynthesis. The protein is Carotenoid 9,10(9',10')-cleavage dioxygenase 1 (CCD1) of Pisum sativum (Garden pea).